We begin with the raw amino-acid sequence, 318 residues long: Protein-L-histidine N-pros-methyltransferase (318 aa).

A signal peptide spans 1-18; that stretch reads MRLLAGWLCLSLASVWLA. Residue N35 is glycosylated (N-linked (GlcNAc...) asparagine). S-adenosyl-L-homocysteine-binding residues include E174, N210, and Y295.

The protein belongs to the METTL9 family.

It localises to the endoplasmic reticulum. The protein localises to the mitochondrion. The catalysed reaction is L-histidyl-[protein] + S-adenosyl-L-methionine = N(pros)-methyl-L-histidyl-[protein] + S-adenosyl-L-homocysteine + H(+). Protein-histidine N-methyltransferase that specifically catalyzes 1-methylhistidine (pros-methylhistidine) methylation of target proteins. Specifically methylates the second His of proteins with a His-x-His (HxH) motif (where 'x' is preferably a small amino acid), while exploiting the first one as a recognition signature. Catalyzes methylation of target proteins such as S100A9, NDUFB3, SLC39A5, SLC39A7, ARMC6 and DNAJB12; 1-methylhistidine modification may affect the binding of zinc and other metals to its target proteins. Constitutes the main methyltransferase for the 1-methylhistidine modification in cell. The protein is Protein-L-histidine N-pros-methyltransferase of Homo sapiens (Human).